The sequence spans 352 residues: tRNA pseudouridine synthase D (352 aa).

Aspartate 78 functions as the Nucleophile in the catalytic mechanism. The 147-residue stretch at 153 to 299 folds into the TRUD domain; the sequence is GVPNYYGEQR…LDQDRRPLLL (147 aa).

It belongs to the pseudouridine synthase TruD family.

It carries out the reaction uridine(13) in tRNA = pseudouridine(13) in tRNA. Responsible for synthesis of pseudouridine from uracil-13 in transfer RNAs. In Aeromonas salmonicida (strain A449), this protein is tRNA pseudouridine synthase D.